The following is a 137-amino-acid chain: Large ribosomal subunit protein eL28 (137 aa).

S2 bears the N-acetylserine mark. Glycyl lysine isopeptide (Lys-Gly) (interchain with G-Cter in SUMO2) cross-links involve residues K58 and K65. Position 115 is a phosphoserine (S115).

It belongs to the eukaryotic ribosomal protein eL28 family. In terms of assembly, component of the large ribosomal subunit.

The protein localises to the cytoplasm. Functionally, component of the large ribosomal subunit. The ribosome is a large ribonucleoprotein complex responsible for the synthesis of proteins in the cell. This chain is Large ribosomal subunit protein eL28 (RPL28), found in Oryctolagus cuniculus (Rabbit).